The primary structure comprises 725 residues: Ribonuclease R (725 aa).

The 329-residue stretch at 264 to 592 folds into the RNB domain; it reads RQDLTDLAFV…IHRLLWMHLF (329 aa). An S1 motif domain is found at 644–725; it reads GKTFSGFISA…IQKRAILTLI (82 aa).

Belongs to the RNR ribonuclease family. RNase R subfamily.

It localises to the cytoplasm. The enzyme catalyses Exonucleolytic cleavage in the 3'- to 5'-direction to yield nucleoside 5'-phosphates.. In terms of biological role, 3'-5' exoribonuclease that releases 5'-nucleoside monophosphates and is involved in maturation of structured RNAs. This Mycoplasma genitalium (strain ATCC 33530 / DSM 19775 / NCTC 10195 / G37) (Mycoplasmoides genitalium) protein is Ribonuclease R.